A 204-amino-acid polypeptide reads, in one-letter code: Urease accessory protein UreG (204 aa).

Position 12-19 (12-19 (GPVGSGKT)) interacts with GTP.

This sequence belongs to the SIMIBI class G3E GTPase family. UreG subfamily. Homodimer. UreD, UreF and UreG form a complex that acts as a GTP-hydrolysis-dependent molecular chaperone, activating the urease apoprotein by helping to assemble the nickel containing metallocenter of UreC. The UreE protein probably delivers the nickel.

It localises to the cytoplasm. Facilitates the functional incorporation of the urease nickel metallocenter. This process requires GTP hydrolysis, probably effectuated by UreG. The polypeptide is Urease accessory protein UreG (Azotobacter vinelandii (strain DJ / ATCC BAA-1303)).